The following is a 597-amino-acid chain: Aspartate--tRNA(Asp/Asn) ligase (597 aa).

L-aspartate is bound at residue Glu182. Residues 206–209 form an aspartate region; the sequence is QLFK. L-aspartate is bound at residue Arg228. ATP-binding positions include 228-230 and Gln237; that span reads RDE. His456 contacts L-aspartate. Glu490 serves as a coordination point for ATP. Residue Arg497 participates in L-aspartate binding. Residue 542 to 545 coordinates ATP; it reads GFDR.

This sequence belongs to the class-II aminoacyl-tRNA synthetase family. Type 1 subfamily. As to quaternary structure, homodimer.

It localises to the cytoplasm. The catalysed reaction is tRNA(Asx) + L-aspartate + ATP = L-aspartyl-tRNA(Asx) + AMP + diphosphate. Functionally, aspartyl-tRNA synthetase with relaxed tRNA specificity since it is able to aspartylate not only its cognate tRNA(Asp) but also tRNA(Asn). Reaction proceeds in two steps: L-aspartate is first activated by ATP to form Asp-AMP and then transferred to the acceptor end of tRNA(Asp/Asn). The sequence is that of Aspartate--tRNA(Asp/Asn) ligase from Desulfatibacillum aliphaticivorans.